A 394-amino-acid polypeptide reads, in one-letter code: Proliferation-associated protein 2G4 (394 aa).

The residue at position 2 (serine 2) is an N-acetylserine. Serine 2 carries the phosphoserine modification. Residues 2-48 (SGEDEQQEQTIAEDLVVTKYKMGGDIANRVLRSLVEASSSGVSVLSL) form a necessary for nucleolar localization region. Residues 46–54 (LSLCEKGDA) are RNA-binding. Lysine 298 is covalently cross-linked (Glycyl lysine isopeptide (Lys-Gly) (interchain with G-Cter in SUMO2)). The necessary for nucleolar localization stretch occupies residues 301-394 (LLQPFNVLYE…ETLEENGAGD (94 aa)). Phosphoserine is present on serine 335. Residues 358–394 (LQSSASRKTQKKKKKKASKTAENATSGETLEENGAGD) form a disordered region. At serine 361 the chain carries Phosphoserine; by PKC/PRKCD. The tract at residues 361–375 (SASRKTQKKKKKKAS) is interaction with RNA. Over residues 365 to 375 (KTQKKKKKKAS) the composition is skewed to basic residues. 2 positions are modified to phosphothreonine: threonine 366 and threonine 386.

It belongs to the peptidase M24 family. In terms of assembly, isoform 2 interacts with the cytoplasmic domain of non-phosphorylated ERBB3; the interaction requires PKC activity. Interacts with AR. Treatment with HRG leads to dissociation from ERBB3 and increases association with AR. Interacts with nucleolin/NCL. Component of a ribonucleoprotein complex containing at least PA2G4, NCL, TOP1, PABPC2, RPLP0, acetylated histone H1 (HIST1H1A or H1F1), histone H1 2/4, RPL4, RPL8, RPL15, RPL18, RPL18A, RPL21, RPL11, RPL12, RPL28, RPL27, RPLP2 and RPL24. Interacts with HDAC2. Interacts with RB1; the interaction is enhanced upon PA2G4 dephosphorylation. Isoform 1 and isoform 2 interact with RNF20. Isoform 2 interacts with HUWE1. Interacts with AKT1. Interacts with DNAJC21. Post-translationally, phosphorylated on serine and threonine residues. Phosphorylation is enhanced by HRG treatment. Basal phosphorylation is PKC-dependent and HRG-induced phosphorylation is predominantly PKC-independent. Phosphorylation at Ser-361 by PKC/PRKCD regulates its nucleolar localization. In terms of processing, isoform 2 is polyubiquitinated, leading to proteasomal degradation and phosphorylation by PKC/PRKCD enhances polyubiquitination.

The protein localises to the cytoplasm. It is found in the nucleus. Its subcellular location is the nucleolus. May play a role in a ERBB3-regulated signal transduction pathway. Seems be involved in growth regulation. Acts a corepressor of the androgen receptor (AR) and is regulated by the ERBB3 ligand neuregulin-1/heregulin (HRG). Inhibits transcription of some E2F1-regulated promoters, probably by recruiting histone acetylase (HAT) activity. Binds RNA. Associates with 28S, 18S and 5.8S mature rRNAs, several rRNA precursors and probably U3 small nucleolar RNA. May be involved in regulation of intermediate and late steps of rRNA processing. May be involved in ribosome assembly. Mediates cap-independent translation of specific viral IRESs (internal ribosomal entry site). Together with PTBP1 is required for the translation initiation on the foot-and-mouth disease virus (FMDV) IRES. Regulates cell proliferation, differentiation, and survival. Isoform 1 suppresses apoptosis whereas isoform 2 promotes cell differentiation. The protein is Proliferation-associated protein 2G4 (Pa2g4) of Rattus norvegicus (Rat).